We begin with the raw amino-acid sequence, 61 residues long: Probable tautomerase lmo2564 (61 aa).

Catalysis depends on P2, which acts as the Proton acceptor; via imino nitrogen.

It belongs to the 4-oxalocrotonate tautomerase family.

This is Probable tautomerase lmo2564 from Listeria monocytogenes serovar 1/2a (strain ATCC BAA-679 / EGD-e).